An 86-amino-acid polypeptide reads, in one-letter code: U15-lycotoxin-Ls1g (86 aa).

Residues 1 to 20 form the signal peptide; that stretch reads MNSKIFAVLLLLGLLSCVLS. The WAP domain occupies 21–66; the sequence is DQYCPKSSITACKKMNIRNDCCKDDDCTGGSWCCATPCGNFCKYPA. Intrachain disulfides connect C24–C54, C32–C58, C41–C53, C42–C80, and C47–C62.

It belongs to the venom protein 11 family. 01 (wap-1) subfamily. In terms of processing, contains 5 disulfide bonds. Expressed by the venom gland.

It localises to the secreted. Has antibacterial activity. In Lycosa singoriensis (Wolf spider), this protein is U15-lycotoxin-Ls1g.